A 106-amino-acid polypeptide reads, in one-letter code: Cytochrome c (106 aa).

3 residues coordinate heme c: C17, C20, and H21. Position 75 is an N6,N6,N6-trimethyllysine (K75). Position 83 (M83) interacts with heme c.

This sequence belongs to the cytochrome c family. Binds 1 heme c group covalently per subunit.

It is found in the mitochondrion intermembrane space. Its function is as follows. Electron carrier protein. The oxidized form of the cytochrome c heme group can accept an electron from the heme group of the cytochrome c1 subunit of cytochrome reductase. Cytochrome c then transfers this electron to the cytochrome oxidase complex, the final protein carrier in the mitochondrial electron-transport chain. This Gibberella zeae (strain ATCC MYA-4620 / CBS 123657 / FGSC 9075 / NRRL 31084 / PH-1) (Wheat head blight fungus) protein is Cytochrome c (CYC1).